The following is a 460-amino-acid chain: Zinc transporter 6 (460 aa).

Residues 1–33 are Cytoplasmic-facing; that stretch reads MGTIHLFRKPQRSFFGKLLQEFRLVAADRRSWK. A helical membrane pass occupies residues 34–54; sequence ILLFGAINVLCTGFLLMWCSS. The Extracellular segment spans residues 55-64; the sequence is TNSIALTAYT. A helical membrane pass occupies residues 65 to 85; it reads YLTIFDLFSLITCLISYWVMM. Residues 86–98 lie on the Cytoplasmic side of the membrane; the sequence is RKPSPVYSFGFER. The chain crosses the membrane as a helical span at residues 99–119; sequence LEVLAVFASTVLAQLGALFIL. The Extracellular segment spans residues 120 to 134; sequence KESAERFLEQPEIHT. The chain crosses the membrane as a helical span at residues 135–155; the sequence is GRLLVGTFVALSFNLFTMLSI. The Cytoplasmic portion of the chain corresponds to 156 to 200; it reads RNKPFAYVSEAASTSWLQEHVADLSRSLCGLIPGLSSIFLPRMNP. Residues 201–221 form a helical membrane-spanning segment; sequence FVLIDLAGAFALCITYMLIEI. Over 222-223 the chain is Extracellular; that stretch reads NN. A helical transmembrane segment spans residues 224–244; sequence YFAVDTASAIAIALMTFGTMY. Topologically, residues 245 to 460 are cytoplasmic; sequence PMSVYSGKVL…GINRMGQPRP (216 aa). The segment at 371 to 390 is disordered; it reads TPVTSTPAKPSSPPPEFSFN.

The protein belongs to the cation diffusion facilitator (CDF) transporter (TC 2.A.4) family. SLC30A subfamily. In terms of assembly, heterodimer with SLC30A5; form a functional zinc ion transmembrane transporter. In terms of tissue distribution, expressed in brain and liver, and to a lower extent also in lung. Highly expressed in brain (at protein level).

The protein resides in the golgi apparatus. It is found in the trans-Golgi network membrane. Its function is as follows. Has probably no intrinsic transporter activity but together with SLC30A5 forms a functional zinc ion:proton antiporter heterodimer, mediating zinc entry into the lumen of organelles along the secretory pathway. As part of that zinc ion:proton antiporter, contributes to zinc ion homeostasis within the early secretory pathway and regulates the activation and folding of enzymes like alkaline phosphatases and enzymes involved in phosphatidylinositol glycan anchor biosynthesis. This is Zinc transporter 6 (Slc30a6) from Mus musculus (Mouse).